Reading from the N-terminus, the 99-residue chain is Integration host factor subunit alpha (99 aa).

A disordered region spans residues 49–71; the sequence is FGNFDLRDKNQRPGRNPKTGEDI.

This sequence belongs to the bacterial histone-like protein family. In terms of assembly, heterodimer of an alpha and a beta chain.

Its function is as follows. This protein is one of the two subunits of integration host factor, a specific DNA-binding protein that functions in genetic recombination as well as in transcriptional and translational control. In Shewanella frigidimarina (strain NCIMB 400), this protein is Integration host factor subunit alpha.